The following is a 180-amino-acid chain: NAD(P)H-quinone oxidoreductase subunit J (180 aa).

Positions 1 to 16 are enriched in polar residues; sequence MNEETQTSELTNTDQG. The tract at residues 1 to 23 is disordered; sequence MNEETQTSELTNTDQGPQIEPGP.

It belongs to the complex I 30 kDa subunit family. NDH-1 can be composed of about 15 different subunits; different subcomplexes with different compositions have been identified which probably have different functions.

It localises to the cellular thylakoid membrane. It carries out the reaction a plastoquinone + NADH + (n+1) H(+)(in) = a plastoquinol + NAD(+) + n H(+)(out). The enzyme catalyses a plastoquinone + NADPH + (n+1) H(+)(in) = a plastoquinol + NADP(+) + n H(+)(out). Functionally, NDH-1 shuttles electrons from an unknown electron donor, via FMN and iron-sulfur (Fe-S) centers, to quinones in the respiratory and/or the photosynthetic chain. The immediate electron acceptor for the enzyme in this species is believed to be plastoquinone. Couples the redox reaction to proton translocation, and thus conserves the redox energy in a proton gradient. Cyanobacterial NDH-1 also plays a role in inorganic carbon-concentration. The polypeptide is NAD(P)H-quinone oxidoreductase subunit J (Prochlorococcus marinus (strain MIT 9211)).